The primary structure comprises 1067 residues: FHIP family protein GL19323 (1067 aa).

Over residues 1-11 (MSWLRSSPLRQ) the composition is skewed to polar residues. Disordered stretches follow at residues 1–31 (MSWL…GSLR), 503–525 (LARP…QPIQ), and 832–1013 (NENS…SEPA). A phosphoserine mark is found at serine 508 and serine 835. Low complexity predominate over residues 842–858 (QPQTTLSQQQQQQQGQQ). The span at 859–878 (RSAYATLSAATPVQATQTSA) shows a compositional bias: polar residues. Low complexity predominate over residues 893 to 904 (SKSISSMFSRRS). Over residues 918 to 949 (LVGNNNSGSGQSQPFSSTGTGTCETSLSTNPQ) the composition is skewed to polar residues. Residues 950–979 (SGAAAARSTGTATTANGNSSNSNISIGGST) show a composition bias toward low complexity. Residues 980 to 996 (QTLSGHSNTTTYSSSTL) show a composition bias toward polar residues.

Belongs to the FHIP family.

The protein is FHIP family protein GL19323 of Drosophila persimilis (Fruit fly).